The primary structure comprises 169 residues: Ribosome maturation factor RimM (169 aa).

Residues 94 to 168 form the PRC barrel domain; it reads DDEFYHADLI…RIVADPPEGL (75 aa).

The protein belongs to the RimM family. Binds ribosomal protein uS19.

The protein localises to the cytoplasm. Its function is as follows. An accessory protein needed during the final step in the assembly of 30S ribosomal subunit, possibly for assembly of the head region. Essential for efficient processing of 16S rRNA. May be needed both before and after RbfA during the maturation of 16S rRNA. It has affinity for free ribosomal 30S subunits but not for 70S ribosomes. The chain is Ribosome maturation factor RimM from Cereibacter sphaeroides (strain ATCC 17029 / ATH 2.4.9) (Rhodobacter sphaeroides).